Here is a 403-residue protein sequence, read N- to C-terminus: Decapping and exoribonuclease protein 1 (403 aa).

Glutamate 223 is an a divalent metal cation binding site. Substrate is bound at residue glutamate 260. Residues aspartate 262, glutamate 273, and isoleucine 274 each contribute to the a divalent metal cation site. Residues lysine 275 and glutamine 297 each coordinate substrate.

It belongs to the DXO/Dom3Z family. A divalent metal cation is required as a cofactor.

It localises to the cytoplasm. It carries out the reaction a 5'-end NAD(+)-phospho-ribonucleoside in mRNA + H2O = a 5'-end phospho-ribonucleoside in mRNA + NAD(+) + H(+). It catalyses the reaction a 5'-end (N(7)-methyl 5'-triphosphoguanosine)-ribonucleoside-ribonucleotide in mRNA + H2O = a (N(7)-methyl 5'-triphosphoguanosine)-nucleoside + a 5'-end phospho-ribonucleoside in mRNA + H(+). Functionally, decapping enzyme for NAD-capped RNAs: specifically hydrolyzes the nicotinamide adenine dinucleotide (NAD) cap from a subset of RNAs by removing the entire NAD moiety from the 5'-end of an NAD-capped RNA. The NAD-cap is present at the 5'-end of some RNAs and snoRNAs. In contrast to the canonical 5'-end N7 methylguanosine (m7G) cap, the NAD cap promotes mRNA decay. Also acts as a non-canonical decapping enzyme that removes the entire cap structure of m7G capped or incompletely capped RNAs and mediates their subsequent degradation. Has decapping and 5'-3' exonuclease activities. Has decapping activity toward incomplete 5'-end cap mRNAs such as unmethylated 5'-end-capped RNA to release GpppN and 5'-end monophosphate RNA. The 5'-end monophosphate RNA is then degraded by the 5'-3' exoribonuclease activity, enabling this enzyme to decap and degrade incompletely capped mRNAs. The protein is Decapping and exoribonuclease protein 1 of Kluyveromyces lactis (strain ATCC 8585 / CBS 2359 / DSM 70799 / NBRC 1267 / NRRL Y-1140 / WM37) (Yeast).